A 298-amino-acid chain; its full sequence is uncharacterized protein (298 aa).

One can recognise an HTH lysR-type domain in the interval 5-62 (TSLSAMRIFEAAARLGSFRAAAEELNLSPSAVSHAIMRLERDLGVALFERTTRSVSLT). Residues 22 to 42 (FRAAAEELNLSPSAVSHAIMR) constitute a DNA-binding region (H-T-H motif).

This sequence belongs to the LysR transcriptional regulatory family.

This is an uncharacterized protein from Sinorhizobium fredii (strain NBRC 101917 / NGR234).